We begin with the raw amino-acid sequence, 367 residues long: Homoserine O-acetyltransferase (367 aa).

In terms of domain architecture, AB hydrolase-1 spans 41–339 (NLIVLEHALT…PVGHDAFLTE (299 aa)). The active-site Nucleophile is the S136. R205 contributes to the substrate binding site. Residues D303 and H333 contribute to the active site. Residue D334 participates in substrate binding.

It belongs to the AB hydrolase superfamily. MetX family. In terms of assembly, homodimer.

The protein resides in the cytoplasm. The catalysed reaction is L-homoserine + acetyl-CoA = O-acetyl-L-homoserine + CoA. Its pathway is amino-acid biosynthesis; L-methionine biosynthesis via de novo pathway; O-acetyl-L-homoserine from L-homoserine: step 1/1. Functionally, transfers an acetyl group from acetyl-CoA to L-homoserine, forming acetyl-L-homoserine. This Corynebacterium diphtheriae (strain ATCC 700971 / NCTC 13129 / Biotype gravis) protein is Homoserine O-acetyltransferase.